Consider the following 297-residue polypeptide: Phosphatidylglycerol--prolipoprotein diacylglyceryl transferase (297 aa).

Transmembrane regions (helical) follow at residues 20–40 (FLTI…GLFI), 58–78 (ILPS…VIFE), 104–124 (IAIW…FLCI), and 133–153 (IHLK…QSIG). Arg154 provides a ligand contact to a 1,2-diacyl-sn-glycero-3-phospho-(1'-sn-glycerol). 3 helical membrane-spanning segments follow: residues 194–214 (TFIY…TIFY), 225–245 (GFIS…IEGL), and 266–286 (AQFI…FLRL).

This sequence belongs to the Lgt family.

The protein resides in the cell inner membrane. The enzyme catalyses L-cysteinyl-[prolipoprotein] + a 1,2-diacyl-sn-glycero-3-phospho-(1'-sn-glycerol) = an S-1,2-diacyl-sn-glyceryl-L-cysteinyl-[prolipoprotein] + sn-glycerol 1-phosphate + H(+). It functions in the pathway protein modification; lipoprotein biosynthesis (diacylglyceryl transfer). Catalyzes the transfer of the diacylglyceryl group from phosphatidylglycerol to the sulfhydryl group of the N-terminal cysteine of a prolipoprotein, the first step in the formation of mature lipoproteins. This is Phosphatidylglycerol--prolipoprotein diacylglyceryl transferase from Prochlorococcus marinus subsp. pastoris (strain CCMP1986 / NIES-2087 / MED4).